Here is a 305-residue protein sequence, read N- to C-terminus: Taste receptor type 2 member 13 (305 aa).

At 1-7 (MGSNVYG) the chain is on the extracellular side. A helical membrane pass occupies residues 8–28 (ILTMVMIAEFVFGNMSNGFIV). The Cytoplasmic segment spans residues 29–43 (LINCIDWVRKGTLSS). The helical transmembrane segment at 44-64 (IGWILLFLAISRMVLIWEMLI) threads the bilayer. Residues 65 to 88 (TWIKYMKYSFSFVTGTELRGIMFT) lie on the Extracellular side of the membrane. Residues 89-109 (WVISNHFSLWLATILSIFYLL) form a helical membrane-spanning segment. At 110-128 (KIASFSKPVFLYLKWREKK) the chain is on the cytoplasmic side. A helical transmembrane segment spans residues 129–149 (VLLIVLLGNLIFLMLNILQIN). At 150–182 (KHIEHWMYQYERNITWSSRVSDFAGFSNLVLLE) the chain is on the extracellular side. An N-linked (GlcNAc...) asparagine glycan is attached at asparagine 162. The helical transmembrane segment at 183–203 (MIVFSVTPFTVALVSFILLIF) threads the bilayer. Residues 204–232 (SLWKHLQKMHLNSRGERDPSTKAHVNALR) are Cytoplasmic-facing. A helical transmembrane segment spans residues 233-253 (IMVSFLLLYATYFISFFLSLI). The Extracellular segment spans residues 254–262 (PMAHKTRLG). The chain crosses the membrane as a helical span at residues 263–283 (LMFSITVGLFYPSSHSFILIL). Over 284 to 305 (GHSNLRQASLWVMTYLKCGQKH) the chain is Cytoplasmic.

It belongs to the G-protein coupled receptor T2R family.

It is found in the cell membrane. In terms of biological role, receptor that may play a role in the perception of bitterness and is gustducin-linked. May play a role in sensing the chemical composition of the gastrointestinal content. The activity of this receptor may stimulate alpha gustducin, mediate PLC-beta-2 activation and lead to the gating of TRPM5. The chain is Taste receptor type 2 member 13 from Mus musculus (Mouse).